Reading from the N-terminus, the 744-residue chain is Biotin sulfoxide reductase (744 aa).

Ser-121 serves as a coordination point for Mo-bis(molybdopterin guanine dinucleotide).

It belongs to the prokaryotic molybdopterin-containing oxidoreductase family. Mo-bis(molybdopterin guanine dinucleotide) serves as cofactor.

Functionally, this enzyme may serve as a scavenger, allowing the cell to utilize biotin sulfoxide as a biotin source. It reduces a spontaneous oxidation product of biotin, D-biotin D-sulfoxide (BSO or BDS), back to biotin. This is Biotin sulfoxide reductase from Cereibacter sphaeroides (Rhodobacter sphaeroides).